The primary structure comprises 361 residues: MAGNSIGQHFRVTTFGESHGIALGCIVDGCPPGLEISEADLQTDLDRRRPGTSRYTTQRREPDEVKILSGVFEGKTTGTSIGLLIENTDQRSKDYSDIKDKFRPGHADYTYHQKYGIRDYRGGGRSSARETAMRVAAGAIAKKYLKQEFGVEIRAYLSQMGDVAIDKVDWNEIENNPFFCPDVDKVEAFDQLIRDLKKEGDSIGAKIQVVATNVPVGLGEPVFDRLDADIAHALMSINAVKGVEIGDGFDVVSQKGSQHRDTLSPQGFGSNHAGGILGGISTGQDIVANIALKPTSSITVPGDTINVDGESTQLITKGRHDPCVGIRAVPIAEAMLAIVVMDHLLRHRGQNHGVSTQTPKI.

Positions 48 and 54 each coordinate NADP(+). FMN contacts are provided by residues 125-127 (RSS), 238-239 (NA), Gly-278, 293-297 (KPTSS), and Arg-319.

Belongs to the chorismate synthase family. In terms of assembly, homotetramer. It depends on FMNH2 as a cofactor.

It catalyses the reaction 5-O-(1-carboxyvinyl)-3-phosphoshikimate = chorismate + phosphate. Its pathway is metabolic intermediate biosynthesis; chorismate biosynthesis; chorismate from D-erythrose 4-phosphate and phosphoenolpyruvate: step 7/7. In terms of biological role, catalyzes the anti-1,4-elimination of the C-3 phosphate and the C-6 proR hydrogen from 5-enolpyruvylshikimate-3-phosphate (EPSP) to yield chorismate, which is the branch point compound that serves as the starting substrate for the three terminal pathways of aromatic amino acid biosynthesis. This reaction introduces a second double bond into the aromatic ring system. This is Chorismate synthase from Vibrio vulnificus (strain YJ016).